Here is a 308-residue protein sequence, read N- to C-terminus: D-alanine--D-alanine ligase (308 aa).

The ATP-grasp domain maps to 105 to 302 (KAIFKALGLD…FPELCERILD (198 aa)). 133–188 (DLPFGVPCVVKPAGEGSSVGVQIVKDAARLADACREAARYKGDVVVERYVKGTEVN) is a binding site for ATP. Residues Asp256, Glu269, and Asn271 each coordinate Mg(2+).

It belongs to the D-alanine--D-alanine ligase family. It depends on Mg(2+) as a cofactor. Mn(2+) is required as a cofactor.

It is found in the cytoplasm. It carries out the reaction 2 D-alanine + ATP = D-alanyl-D-alanine + ADP + phosphate + H(+). It participates in cell wall biogenesis; peptidoglycan biosynthesis. Cell wall formation. This chain is D-alanine--D-alanine ligase, found in Anaeromyxobacter sp. (strain Fw109-5).